The sequence spans 86 residues: Cell division topological specificity factor (86 aa).

It belongs to the MinE family.

In terms of biological role, prevents the cell division inhibition by proteins MinC and MinD at internal division sites while permitting inhibition at polar sites. This ensures cell division at the proper site by restricting the formation of a division septum at the midpoint of the long axis of the cell. The sequence is that of Cell division topological specificity factor from Shewanella halifaxensis (strain HAW-EB4).